The chain runs to 401 residues: 1-deoxy-D-xylulose 5-phosphate reductoisomerase (401 aa).

Residues Thr10, Gly11, Ser12, Ile13, Asn38, and Asn124 each coordinate NADPH. Lys125 serves as a coordination point for 1-deoxy-D-xylulose 5-phosphate. Glu126 is a binding site for NADPH. A Mn(2+)-binding site is contributed by Asp150. The 1-deoxy-D-xylulose 5-phosphate site is built by Ser151, Glu152, Ser186, and His209. Glu152 is a binding site for Mn(2+). Gly215 lines the NADPH pocket. 4 residues coordinate 1-deoxy-D-xylulose 5-phosphate: Ser222, Asn227, Lys228, and Glu231. Glu231 contributes to the Mn(2+) binding site.

The protein belongs to the DXR family. Mg(2+) is required as a cofactor. It depends on Mn(2+) as a cofactor.

It carries out the reaction 2-C-methyl-D-erythritol 4-phosphate + NADP(+) = 1-deoxy-D-xylulose 5-phosphate + NADPH + H(+). It participates in isoprenoid biosynthesis; isopentenyl diphosphate biosynthesis via DXP pathway; isopentenyl diphosphate from 1-deoxy-D-xylulose 5-phosphate: step 1/6. In terms of biological role, catalyzes the NADPH-dependent rearrangement and reduction of 1-deoxy-D-xylulose-5-phosphate (DXP) to 2-C-methyl-D-erythritol 4-phosphate (MEP). The polypeptide is 1-deoxy-D-xylulose 5-phosphate reductoisomerase (Vibrio campbellii (strain ATCC BAA-1116)).